We begin with the raw amino-acid sequence, 738 residues long: Isocitrate dehydrogenase [NADP] (738 aa).

Asparagine 83 and serine 85 together coordinate NADP(+). Residues serine 130, asparagine 133, arginine 137, arginine 143, and lysine 253 each contribute to the D-threo-isocitrate site. Asparagine 133 contacts NADP(+). Position 346 (aspartate 346) interacts with Mg(2+). 2 residues coordinate D-threo-isocitrate: tyrosine 416 and arginine 543. 2 residues coordinate Mg(2+): aspartate 544 and aspartate 548. Positions 580, 585, 596, 598, and 645 each coordinate NADP(+).

This sequence belongs to the monomeric-type IDH family. In terms of assembly, monomer. Requires Mg(2+) as cofactor. Mn(2+) is required as a cofactor.

The protein resides in the cytoplasm. It carries out the reaction D-threo-isocitrate + NADP(+) = 2-oxoglutarate + CO2 + NADPH. Weakly inhibited by oxaloacetate, 2-oxoglutarate and citrate. Severely inhibited by oxaloacetate plus glyoxylate. Catalyzes the oxidative decarboxylation of isocitrate to 2-oxoglutarate and carbon dioxide with the concomitant reduction of NADP(+). Cannot use NAD(+). The sequence is that of Isocitrate dehydrogenase [NADP] from Corynebacterium glutamicum (strain ATCC 13032 / DSM 20300 / JCM 1318 / BCRC 11384 / CCUG 27702 / LMG 3730 / NBRC 12168 / NCIMB 10025 / NRRL B-2784 / 534).